The chain runs to 379 residues: Caffeyl-CoA reductase-Etf complex subunit CarC (379 aa).

FAD contacts are provided by residues 122 to 131 and 155 to 157; these read FALTEPGAGS and FIT. Position 131 (Ser131) interacts with substrate. 239 to 242 contacts substrate; that stretch reads DVGR. FAD is bound by residues Arg267, Gln278, and 335–339; that span reads QIHGG. Glu362 serves as the catalytic Proton acceptor. Gly363 contributes to the substrate binding site. 364 to 366 lines the FAD pocket; sequence TSQ.

It belongs to the acyl-CoA dehydrogenase family. Part of the homotrimeric caffeyl-CoA reductase-Etf complex composed of (R)-2-hydroxyisocaproyl-CoA dehydratase CarC, and the electron transfer flavoprotein (ETF) alpha (CarE) and beta (CarD) subunits. FAD is required as a cofactor.

The protein resides in the cytoplasm. The enzyme catalyses hydrocaffeoyl-CoA + 2 reduced [2Fe-2S]-[ferredoxin] + 2 NAD(+) = (E)-caffeoyl-CoA + 2 oxidized [2Fe-2S]-[ferredoxin] + 2 NADH. Its function is as follows. The Caffeyl-CoA reductase-Etf complex catalyzes the reduction of caffeyl-CoA to yield hydrocaffeyl-CoA. It couples the endergonic ferredoxin reduction with NADH as reductant to the exergonic reduction of caffeoyl-CoA with the same reductant. It uses the mechanism of electron bifurcation to overcome the steep energy barrier in ferredoxin reduction. Also reduces 4-coumaroyl-CoA and feruloyl-CoA. The polypeptide is Caffeyl-CoA reductase-Etf complex subunit CarC (Acetobacterium woodii (strain ATCC 29683 / DSM 1030 / JCM 2381 / KCTC 1655 / WB1)).